The following is a 729-amino-acid chain: Fatty acid oxidation complex subunit alpha (729 aa).

Residues methionine 1–lysine 189 form an enoyl-CoA hydratase/isomerase region. Residue aspartate 296 coordinates substrate. The tract at residues glutamate 311–alanine 729 is 3-hydroxyacyl-CoA dehydrogenase. NAD(+) is bound by residues methionine 324, aspartate 343, valine 400–glutamate 402, lysine 407, and serine 429. The active-site For 3-hydroxyacyl-CoA dehydrogenase activity is the histidine 450. Asparagine 453 contacts NAD(+). Substrate-binding residues include asparagine 500 and tyrosine 660. The segment at arginine 708–alanine 729 is disordered.

The protein in the N-terminal section; belongs to the enoyl-CoA hydratase/isomerase family. In the C-terminal section; belongs to the 3-hydroxyacyl-CoA dehydrogenase family. In terms of assembly, heterotetramer of two alpha chains (FadB) and two beta chains (FadA).

The catalysed reaction is a (3S)-3-hydroxyacyl-CoA + NAD(+) = a 3-oxoacyl-CoA + NADH + H(+). The enzyme catalyses a (3S)-3-hydroxyacyl-CoA = a (2E)-enoyl-CoA + H2O. It carries out the reaction a 4-saturated-(3S)-3-hydroxyacyl-CoA = a (3E)-enoyl-CoA + H2O. It catalyses the reaction (3S)-3-hydroxybutanoyl-CoA = (3R)-3-hydroxybutanoyl-CoA. The catalysed reaction is a (3Z)-enoyl-CoA = a 4-saturated (2E)-enoyl-CoA. The enzyme catalyses a (3E)-enoyl-CoA = a 4-saturated (2E)-enoyl-CoA. The protein operates within lipid metabolism; fatty acid beta-oxidation. Its function is as follows. Involved in the aerobic and anaerobic degradation of long-chain fatty acids via beta-oxidation cycle. Catalyzes the formation of 3-oxoacyl-CoA from enoyl-CoA via L-3-hydroxyacyl-CoA. It can also use D-3-hydroxyacyl-CoA and cis-3-enoyl-CoA as substrate. This chain is Fatty acid oxidation complex subunit alpha, found in Escherichia coli O17:K52:H18 (strain UMN026 / ExPEC).